Consider the following 802-residue polypeptide: MSSLGASFVQIKFDDLQFFENCGGGSFGSVYRAKWISQDKEVAVKKLLKIEKEAEILSVLSHRNIIQFYGVILEPPNYGIVTEYASLGSLYDYINSNRSEEMDMEHIMTWATDVAKGMHYLHMEAPVKVIHRDLKSRNVVIAADGVLKICDFGASRFHNHTTHMSLVGTFPWMAPEVIQSLPVSETCDTYSYGVVLWEMLTREVPFKGLEGLQVAWLVVEKNERLTIPSSCPRSFAELLHQCWEADAKKRPSFKQIISILESMSNDTNLPDQCNSFLHNKAEWRCEIEATLERLKKLERDLSFKEQELKERERRLKMWEQKLTEQSNTPLLPSFEIGAWTEDDVYFWVQQLVRKGESSVEMSGYASLFKENNITGKRLLLLEEEDLKDMGIVSKGHIIHFKSAIEKLTHDYLNLFHFPPLIKDSGGEPEENEEKIVNLELVFGFHLKPGTGPQDCKWKMYMEMDGDEVAITYIKDVTFNTSLPDAEILKMTKPPFVMEKWIVGIAEDQTVECTVTYENDVRTPKLTKHVHSIQWDRTKPQDEVKAVQLAIQTLFSSSEGNPGSRSDSSADCQWLDTLRMRQIASHTSLQRSQSNPILGSPFFPYFANQDSYAAAVRRTQTPVKYQQITPSINPSRSSSPTQYGLSRNFSSLNLSSRDSGFSSLNDSSSERGRYSDRSRNKYYRGSVSLNSSPKGRYGGKSQHSTPSRERYSGKFYRLPQSALNTHQSPDFKRSPNDHDRRVPRTIPGMPLHPETASKAGEEESRVSEGGWTKVEYRKKTHRQLSAKTSKERTRGNYRGRRNF.

Ser-2 carries the N-acetylserine modification. Residues Ser-2, Ser-3, and Ser-7 each carry the phosphoserine modification. Positions 16–277 (LQFFENCGGG…NLPDQCNSFL (262 aa)) constitute a Protein kinase domain. ATP is bound by residues 22 to 30 (CGGGSFGSV) and Lys-45. Asp-133 functions as the Proton acceptor in the catalytic mechanism. Position 161 is a phosphothreonine; by autocatalysis (Thr-161). Ser-165 is subject to Phosphoserine; by autocatalysis. Phosphoserine is present on residues Ser-275 and Ser-302. The segment at 287 to 308 (IEATLERLKKLERDLSFKEQEL) is leucine-zipper. The SAM domain maps to 339-410 (WTEDDVYFWV…KSAIEKLTHD (72 aa)). 3 positions are modified to phosphoserine: Lys-434, Gln-453, and Ser-567. A Phosphothreonine modification is found at Thr-586. Residues Ser-587, Ser-593, and Ser-599 each carry the phosphoserine modification. Over residues 624 to 642 (YQQITPSINPSRSSSPTQY) the composition is skewed to polar residues. Residues 624 to 802 (YQQITPSINP…RGNYRGRRNF (179 aa)) form a disordered region. Residue Thr-628 is modified to Phosphothreonine. A phosphoserine mark is found at Ser-634, Ser-638, Ser-649, Ser-650, and Ser-661. The span at 643 to 666 (GLSRNFSSLNLSSRDSGFSSLNDS) shows a compositional bias: low complexity. Over residues 667-678 (SSERGRYSDRSR) the composition is skewed to basic and acidic residues. The tract at residues 670–713 (RGRYSDRSRNKYYRGSVSLNSSPKGRYGGKSQHSTPSRERYSGK) is sensing domain (S). A phosphoserine mark is found at Ser-685, Ser-720, Ser-727, and Ser-733. Positions 728–741 (PDFKRSPNDHDRRV) are enriched in basic and acidic residues. Thr-744 carries the phosphothreonine modification. A C-terminal domain (CTD) region spans residues 776 to 802 (RKKTHRQLSAKTSKERTRGNYRGRRNF).

The protein belongs to the protein kinase superfamily. STE Ser/Thr protein kinase family. MAP kinase kinase kinase subfamily. In terms of assembly, homodimer. Interacts with ZNF33A. Component of a signaling complex containing at least AKAP13, PKN1, MAPK14, MAP3K20 and MAP2K3. Within this complex, AKAP13 interacts directly with PKN1, which in turn recruits MAPK14, MAP2K3 and MAP3K20. Interacts with EIF2AK4/GCN2; promoting EIF2AK4/GCN2 kinase activity. As to quaternary structure, interacts with isoform ZAKbeta. Interacts with isoform ZAKalpha. The cofactor is Mg(2+). In terms of processing, activated by phosphorylation by PKN1, followed by autophosphorylation on Thr-161 and Ser-165. Autophosphorylation in response to ribotoxic stress promotes dissociation from colliding ribosomes and activation.

It localises to the cytoplasm. It is found in the nucleus. It catalyses the reaction L-seryl-[protein] + ATP = O-phospho-L-seryl-[protein] + ADP + H(+). It carries out the reaction L-threonyl-[protein] + ATP = O-phospho-L-threonyl-[protein] + ADP + H(+). Activated in response to stress, such as ribosomal stress, osmotic shock and ionizing radiation. Activated by phosphorylation by PKN1, followed by autophosphorylation on Thr-161 and Ser-165. Stress-activated component of a protein kinase signal transduction cascade that promotes programmed cell death in response to various stress, such as ribosomal stress, osmotic shock and ionizing radiation. Acts by catalyzing phosphorylation of MAP kinase kinases, leading to activation of the JNK (MAPK8/JNK1, MAPK9/JNK2 and/or MAPK10/JNK3) and MAP kinase p38 (MAPK11, MAPK12, MAPK13 and/or MAPK14) pathways. Activates JNK through phosphorylation of MAP2K4/MKK4 and MAP2K7/MKK7, and MAP kinase p38 gamma (MAPK12) via phosphorylation of MAP2K3/MKK3 and MAP2K6/MKK6. Involved in stress associated with adrenergic stimulation: contributes to cardiac decompensation during periods of acute cardiac stress. May be involved in regulation of S and G2 cell cycle checkpoint by mediating phosphorylation of CHEK2. Its function is as follows. Key component of the stress-activated protein kinase signaling cascade in response to ribotoxic stress or UV-B irradiation. Acts as the proximal sensor of ribosome collisions during the ribotoxic stress response (RSR). Directly binds to the ribosome by inserting its flexible C-terminus into the ribosomal intersubunit space, thereby acting as a sentinel for colliding ribosomes. Upon ribosome collisions, activates either the stress-activated protein kinase signal transduction cascade or the integrated stress response (ISR), leading to programmed cell death or cell survival, respectively. Dangerous levels of ribosome collisions trigger the autophosphorylation and activation of MAP3K20, which dissociates from colliding ribosomes and phosphorylates MAP kinase kinases, leading to activation of the JNK and MAP kinase p38 pathways that promote programmed cell death. Less dangerous levels of ribosome collisions trigger the integrated stress response (ISR): MAP3K20 activates EIF2AK4/GCN2 independently of its protein-kinase activity, promoting EIF2AK4/GCN2-mediated phosphorylation of EIF2S1/eIF-2-alpha. Also acts as a histone kinase by phosphorylating histone H3 at 'Ser-28' (H3S28ph). Functionally, isoform that lacks the C-terminal region that mediates ribosome-binding: does not act as a sensor of ribosome collisions in response to ribotoxic stress. May act as an antagonist of isoform ZAKalpha: interacts with isoform ZAKalpha, leading to decrease the expression of isoform ZAKalpha. This is Mitogen-activated protein kinase kinase kinase 20 from Mus musculus (Mouse).